The primary structure comprises 23 residues: Cysteine-rich venom protein 24 (23 aa).

The tract at residues 1 to 23 is disordered; the sequence is VDFASESXNKRENQQIVDKHNAL. Residues 8-23 show a composition bias toward basic and acidic residues; it reads XNKRENQQIVDKHNAL.

This sequence belongs to the CRISP family. Contains 8 disulfide bonds. As to expression, expressed by the venom gland.

It localises to the secreted. The polypeptide is Cysteine-rich venom protein 24 (Naja kaouthia (Monocled cobra)).